We begin with the raw amino-acid sequence, 432 residues long: 3-phosphoshikimate 1-carboxyvinyltransferase (432 aa).

K23, S24, and R28 together coordinate 3-phosphoshikimate. A phosphoenolpyruvate-binding site is contributed by K23. G95 and R123 together coordinate phosphoenolpyruvate. 3-phosphoshikimate-binding residues include S167, Q169, D317, and K344. Q169 is a phosphoenolpyruvate binding site. D317 serves as the catalytic Proton acceptor. R348 and R390 together coordinate phosphoenolpyruvate.

Belongs to the EPSP synthase family. In terms of assembly, monomer.

It localises to the cytoplasm. It carries out the reaction 3-phosphoshikimate + phosphoenolpyruvate = 5-O-(1-carboxyvinyl)-3-phosphoshikimate + phosphate. It functions in the pathway metabolic intermediate biosynthesis; chorismate biosynthesis; chorismate from D-erythrose 4-phosphate and phosphoenolpyruvate: step 6/7. Catalyzes the transfer of the enolpyruvyl moiety of phosphoenolpyruvate (PEP) to the 5-hydroxyl of shikimate-3-phosphate (S3P) to produce enolpyruvyl shikimate-3-phosphate and inorganic phosphate. This is 3-phosphoshikimate 1-carboxyvinyltransferase from Staphylococcus aureus (strain bovine RF122 / ET3-1).